A 715-amino-acid polypeptide reads, in one-letter code: MLPEEDLKIIRKELGREPTLVEQGCFLNLWSEHCSYRSSAPLLKTFTSTGENVLIGPGDDAAIIKFEDGYVLAIGMESHNHPSYVDPYNGAATGIGGIVRDIISMGARPIALMDPLYFGPLDTPKNLFLFEQIIKGIAGYGNCIGVPVVNGETFFDRRYSGNPLVNVVAVGLCKEENVTTSRSQKAENKLILAGSSTGKDGLGGASFASRDLSESAEAEDRPSVQVGDPYTEKLVMEMTLEAIEKGYVKSCKDLGAAGLGGASSELAAKGGLGARIIADAVPQREPNMNAYEILLAESQERMLFEVAPEDVDAVLALVQKYDLNGAVVGYLTKEPTYTVEFGGEIVADIPIAFLTGGAPTCEKPSEAPTLREEGKKPETPEDLKVAFLKVLSSYNIASKEWIYRQYDHEVQLRTVVKPGEDSGVLRITGTKGIALTCGCQPRATLLDPYNGGKTAIIENSMNLAVKGAEPLAIVNCLNFGNPERPETYWQFENAVLGLGDEARKLSIPVVGGNVSLYNESDEFKTAIPPTPSIGMIGKVDLEIPLPSGFFAKDGDSIILVGETTPEMGGSEYYACMDSGNAGMVPAVPENAPELIKAIIEAVKSGKLSSAHDLSLGGIGAGLARMCRSMGAKVDLSELAGETQADELLFSEAPARALLAISEPEAVREILKDVPHAVIGKVGGETLEIKGKNFELSVSLKEIAEAYGSLTRFMMG.

Residue H33 is part of the active site. Y36 lines the ATP pocket. Position 77 (E77) interacts with Mg(2+). Residues 78-81 (SHNH) and R100 each bind substrate. H79 acts as the Proton acceptor in catalysis. D101 is a binding site for Mg(2+). Substrate is bound at residue Q225. D253 is a Mg(2+) binding site. A substrate-binding site is contributed by 297-299 (ESQ). 2 residues coordinate ATP: N475 and G512. N513 contacts Mg(2+). S515 contributes to the substrate binding site.

This sequence belongs to the FGAMS family. As to quaternary structure, monomer. Part of the FGAM synthase complex composed of 1 PurL, 1 PurQ and 2 PurS subunits.

It is found in the cytoplasm. It catalyses the reaction N(2)-formyl-N(1)-(5-phospho-beta-D-ribosyl)glycinamide + L-glutamine + ATP + H2O = 2-formamido-N(1)-(5-O-phospho-beta-D-ribosyl)acetamidine + L-glutamate + ADP + phosphate + H(+). It participates in purine metabolism; IMP biosynthesis via de novo pathway; 5-amino-1-(5-phospho-D-ribosyl)imidazole from N(2)-formyl-N(1)-(5-phospho-D-ribosyl)glycinamide: step 1/2. In terms of biological role, part of the phosphoribosylformylglycinamidine synthase complex involved in the purines biosynthetic pathway. Catalyzes the ATP-dependent conversion of formylglycinamide ribonucleotide (FGAR) and glutamine to yield formylglycinamidine ribonucleotide (FGAM) and glutamate. The FGAM synthase complex is composed of three subunits. PurQ produces an ammonia molecule by converting glutamine to glutamate. PurL transfers the ammonia molecule to FGAR to form FGAM in an ATP-dependent manner. PurS interacts with PurQ and PurL and is thought to assist in the transfer of the ammonia molecule from PurQ to PurL. This chain is Phosphoribosylformylglycinamidine synthase subunit PurL, found in Methanosarcina acetivorans (strain ATCC 35395 / DSM 2834 / JCM 12185 / C2A).